We begin with the raw amino-acid sequence, 1022 residues long: Protein translocase subunit SecA (1022 aa).

ATP-binding positions include Gln-143, 161 to 165, and Asp-661; that span reads GEGKT. The interval 973–1001 is disordered; it reads AGSILSHESDVPSGTAAQQPIKADVKPGR. Residues Cys-1005, Cys-1007, Cys-1016, and His-1017 each coordinate Zn(2+).

The protein belongs to the SecA family. Monomer and homodimer. Part of the essential Sec protein translocation apparatus which comprises SecA, SecYEG and auxiliary proteins SecDF. Other proteins may also be involved. Zn(2+) is required as a cofactor.

The protein resides in the cell inner membrane. The protein localises to the cytoplasm. The enzyme catalyses ATP + H2O + cellular proteinSide 1 = ADP + phosphate + cellular proteinSide 2.. Functionally, part of the Sec protein translocase complex. Interacts with the SecYEG preprotein conducting channel. Has a central role in coupling the hydrolysis of ATP to the transfer of proteins into and across the cell membrane, serving as an ATP-driven molecular motor driving the stepwise translocation of polypeptide chains across the membrane. This is Protein translocase subunit SecA from Chlorobium phaeobacteroides (strain DSM 266 / SMG 266 / 2430).